Reading from the N-terminus, the 241-residue chain is Ribosomal RNA small subunit methyltransferase J (241 aa).

S-adenosyl-L-methionine-binding positions include 94 to 95 (RD) and aspartate 163.

The protein belongs to the methyltransferase superfamily. RsmJ family.

It is found in the cytoplasm. The catalysed reaction is guanosine(1516) in 16S rRNA + S-adenosyl-L-methionine = N(2)-methylguanosine(1516) in 16S rRNA + S-adenosyl-L-homocysteine + H(+). Specifically methylates the guanosine in position 1516 of 16S rRNA. This chain is Ribosomal RNA small subunit methyltransferase J, found in Francisella tularensis subsp. novicida (strain U112).